Consider the following 509-residue polypeptide: Maturase K (509 aa).

Belongs to the intron maturase 2 family. MatK subfamily.

Its subcellular location is the plastid. It is found in the chloroplast. Its function is as follows. Usually encoded in the trnK tRNA gene intron. Probably assists in splicing its own and other chloroplast group II introns. This is Maturase K from Nicotiana glauca (Glaucous tobacco).